The following is a 70-amino-acid chain: Large ribosomal subunit protein bL31 (70 aa).

Residues cysteine 16, cysteine 18, cysteine 37, and cysteine 40 each contribute to the Zn(2+) site.

Belongs to the bacterial ribosomal protein bL31 family. Type A subfamily. As to quaternary structure, part of the 50S ribosomal subunit. Requires Zn(2+) as cofactor.

Its function is as follows. Binds the 23S rRNA. The protein is Large ribosomal subunit protein bL31 of Haemophilus influenzae (strain 86-028NP).